A 457-amino-acid polypeptide reads, in one-letter code: Bifunctional protein GlmU (457 aa).

A pyrophosphorylase region spans residues 1-229; the sequence is MSNSAKSVVI…LSEMEGVNNR (229 aa). UDP-N-acetyl-alpha-D-glucosamine contacts are provided by residues 11 to 14, Lys25, Gln76, 81 to 82, 103 to 105, Gly140, Glu154, Asn169, and Asn227; these read LAAG, GT, and YGD. Asp105 is a Mg(2+) binding site. A Mg(2+)-binding site is contributed by Asn227. A linker region spans residues 230–250; that stretch reads LQLSALERIYQSEQAEQLLLA. Positions 251 to 457 are N-acetyltransferase; that stretch reads GVMLLDPARF…GWKRPVKEKK (207 aa). Residues Arg333 and Lys351 each coordinate UDP-N-acetyl-alpha-D-glucosamine. The active-site Proton acceptor is His363. Residues Tyr366 and Asn377 each contribute to the UDP-N-acetyl-alpha-D-glucosamine site. Acetyl-CoA is bound by residues Ala380, 386–387, Ser405, Ala423, and Arg440; that span reads NY.

The protein in the N-terminal section; belongs to the N-acetylglucosamine-1-phosphate uridyltransferase family. This sequence in the C-terminal section; belongs to the transferase hexapeptide repeat family. In terms of assembly, homotrimer. Requires Mg(2+) as cofactor.

The protein localises to the cytoplasm. The enzyme catalyses alpha-D-glucosamine 1-phosphate + acetyl-CoA = N-acetyl-alpha-D-glucosamine 1-phosphate + CoA + H(+). The catalysed reaction is N-acetyl-alpha-D-glucosamine 1-phosphate + UTP + H(+) = UDP-N-acetyl-alpha-D-glucosamine + diphosphate. It functions in the pathway nucleotide-sugar biosynthesis; UDP-N-acetyl-alpha-D-glucosamine biosynthesis; N-acetyl-alpha-D-glucosamine 1-phosphate from alpha-D-glucosamine 6-phosphate (route II): step 2/2. It participates in nucleotide-sugar biosynthesis; UDP-N-acetyl-alpha-D-glucosamine biosynthesis; UDP-N-acetyl-alpha-D-glucosamine from N-acetyl-alpha-D-glucosamine 1-phosphate: step 1/1. Its pathway is bacterial outer membrane biogenesis; LPS lipid A biosynthesis. Its function is as follows. Catalyzes the last two sequential reactions in the de novo biosynthetic pathway for UDP-N-acetylglucosamine (UDP-GlcNAc). The C-terminal domain catalyzes the transfer of acetyl group from acetyl coenzyme A to glucosamine-1-phosphate (GlcN-1-P) to produce N-acetylglucosamine-1-phosphate (GlcNAc-1-P), which is converted into UDP-GlcNAc by the transfer of uridine 5-monophosphate (from uridine 5-triphosphate), a reaction catalyzed by the N-terminal domain. This is Bifunctional protein GlmU from Photorhabdus laumondii subsp. laumondii (strain DSM 15139 / CIP 105565 / TT01) (Photorhabdus luminescens subsp. laumondii).